We begin with the raw amino-acid sequence, 152 residues long: Large ribosomal subunit protein eL29 (152 aa).

A compositionally biased stretch (basic residues) spans 1 to 26 (MAKSKNHTTHNQSRKWHRNGIKKPRS). The interval 1 to 32 (MAKSKNHTTHNQSRKWHRNGIKKPRSQRYESL) is disordered. An N6-methyllysine modification is found at lysine 5. Serine 31 carries the phosphoserine modification. Lysine 33 is subject to N6-acetyllysine. Residues 119 to 152 (CRPKSQAKASTKAKPPAAAAPAAKGAQAPTKAPE) form a disordered region. Over residues 121–152 (PKSQAKASTKAKPPAAAAPAAKGAQAPTKAPE) the composition is skewed to low complexity.

This sequence belongs to the eukaryotic ribosomal protein eL29 family. Component of the large ribosomal subunit.

Its subcellular location is the cytoplasm. Functionally, component of the large ribosomal subunit. The ribosome is a large ribonucleoprotein complex responsible for the synthesis of proteins in the cell. This chain is Large ribosomal subunit protein eL29 (RPL29), found in Bos taurus (Bovine).